We begin with the raw amino-acid sequence, 265 residues long: Protein Exd1 homolog (265 aa).

Residues 32 to 82 enclose the 3'-5' exonuclease domain; sequence EKQLDRIVLIYQVDTTYHSALKDIKDQKIISLLVEPSFYGRHHPTSILVVA.

Belongs to the EXD1 family. As to quaternary structure, homodimer.

Its function is as follows. RNA-binding protein. Inactive exonuclease. This Drosophila melanogaster (Fruit fly) protein is Protein Exd1 homolog.